Here is a 686-residue protein sequence, read N- to C-terminus: Translation initiation factor IF-2 (686 aa).

Residues 54 to 105 (KPSVADEFEVEEKVVRSKKNSNKKKKKGKGNEDKRQENFAGRQQTQTVETPD) are disordered. Residues 69–81 (RSKKNSNKKKKKG) are compositionally biased toward basic residues. The 170-residue stretch at 188–357 (ERPAVVTIMG…LLISEVEEYK (170 aa)) folds into the tr-type G domain. The interval 197–204 (GHVDHGKT) is G1. 197–204 (GHVDHGKT) is a binding site for GTP. The interval 222–226 (GITQH) is G2. A G3 region spans residues 243–246 (DTPG). GTP-binding positions include 243–247 (DTPGH) and 297–300 (NKMD). A G4 region spans residues 297–300 (NKMD). The interval 333–335 (SAI) is G5.

It belongs to the TRAFAC class translation factor GTPase superfamily. Classic translation factor GTPase family. IF-2 subfamily.

It is found in the cytoplasm. One of the essential components for the initiation of protein synthesis. Protects formylmethionyl-tRNA from spontaneous hydrolysis and promotes its binding to the 30S ribosomal subunits. Also involved in the hydrolysis of GTP during the formation of the 70S ribosomal complex. The polypeptide is Translation initiation factor IF-2 (Bacillus anthracis (strain A0248)).